A 486-amino-acid chain; its full sequence is Cytochrome P450 monooxygenase 1 (486 aa).

A signal peptide spans 1 to 21 (MSHFLPTLILTSLTLVAYVLA). An N-linked (GlcNAc...) asparagine glycan is attached at asparagine 346. Cysteine 430 serves as a coordination point for heme. N-linked (GlcNAc...) asparagine glycosylation is present at asparagine 434.

Belongs to the cytochrome P450 family. Heme is required as a cofactor.

Its pathway is mycotoxin biosynthesis. Its function is as follows. Cytochrome P450 monooxygenase; part of the gene cluster that mediates the biosynthesis of aphidicolin, a specific inhibitor of eukaryotic DNA synthesis and DNA polymerase alpha. The geranylgeranyl pyrophosphate synthase GGS is required for supplying a sufficient amount of geranylgeranyl diphosphate (GGDP), the general precursor of diterpenes. The diterpene synthase ACS then catalyzes the conversion of geranylgeranyl diphosphate to aphidicolan-16-beta-ol via the intermediate syn-copalyldiphosphate (syn-CDP). In addition to aphidicolan-16-beta-ol, the enzyme also produces low levels of amphidicol-15-ene and amphidicol-16-ene. The cytochrome P450 monooxygenase P450-2 then catalyzes the two-step hydroxylation from aphidicolan-16-beta-ol to 3-deoxyaphidicolin via a 17,3-deoxyaphidicolin intermediate. Finally, the cytochrome P450 monooxygenase P450-1 converts 3-deoxyaphidicolin to aphidicolin. The protein is Cytochrome P450 monooxygenase 1 (PbP450-1) of Neocamarosporium betae (Beet black rot fungus).